We begin with the raw amino-acid sequence, 405 residues long: L-carnitine CoA-transferase (405 aa).

The CoA site is built by K97 and R104. D169 functions as the Nucleophile in the catalytic mechanism.

Belongs to the CoA-transferase III family. CaiB subfamily. In terms of assembly, homodimer.

Its subcellular location is the cytoplasm. The catalysed reaction is crotonobetainyl-CoA + (R)-carnitine = crotonobetaine + (R)-carnitinyl-CoA. It carries out the reaction 4-(trimethylamino)butanoyl-CoA + (R)-carnitine = (R)-carnitinyl-CoA + 4-(trimethylamino)butanoate. It functions in the pathway amine and polyamine metabolism; carnitine metabolism. Functionally, catalyzes the reversible transfer of the CoA moiety from gamma-butyrobetainyl-CoA to L-carnitine to generate L-carnitinyl-CoA and gamma-butyrobetaine. Is also able to catalyze the reversible transfer of the CoA moiety from gamma-butyrobetainyl-CoA or L-carnitinyl-CoA to crotonobetaine to generate crotonobetainyl-CoA. The polypeptide is L-carnitine CoA-transferase (Salmonella enteritidis PT4 (strain P125109)).